The chain runs to 158 residues: Small ribosomal subunit protein uS17 (158 aa).

An N-acetylalanine modification is found at alanine 2. The residue at position 22 (arginine 22) is a Citrulline. Lysine 38, lysine 45, and lysine 58 each carry N6-acetyllysine. The S-palmitoyl cysteine moiety is linked to residue cysteine 60. Phosphoserine is present on serine 67. An Omega-N-methylarginine modification is found at arginine 69. Serine 110 carries the phosphoserine modification.

It belongs to the universal ribosomal protein uS17 family. As to quaternary structure, component of the small ribosomal subunit. Part of the small subunit (SSU) processome, composed of more than 70 proteins and the RNA chaperone small nucleolar RNA (snoRNA) U3. Citrullinated by PADI4.

The protein resides in the cytoplasm. Its subcellular location is the nucleus. It localises to the nucleolus. Component of the small ribosomal subunit. The ribosome is a large ribonucleoprotein complex responsible for the synthesis of proteins in the cell. Part of the small subunit (SSU) processome, first precursor of the small eukaryotic ribosomal subunit. During the assembly of the SSU processome in the nucleolus, many ribosome biogenesis factors, an RNA chaperone and ribosomal proteins associate with the nascent pre-rRNA and work in concert to generate RNA folding, modifications, rearrangements and cleavage as well as targeted degradation of pre-ribosomal RNA by the RNA exosome. The sequence is that of Small ribosomal subunit protein uS17 (RPS11) from Canis lupus familiaris (Dog).